The following is a 514-amino-acid chain: Peptide chain release factor 3 (514 aa).

Residues lysine 8–histidine 268 enclose the tr-type G domain. Residues serine 17–threonine 24, aspartate 85–histidine 89, and asparagine 139–aspartate 142 contribute to the GTP site.

It belongs to the TRAFAC class translation factor GTPase superfamily. Classic translation factor GTPase family. PrfC subfamily.

Its subcellular location is the cytoplasm. Functionally, increases the formation of ribosomal termination complexes and stimulates activities of RF-1 and RF-2. It binds guanine nucleotides and has strong preference for UGA stop codons. It may interact directly with the ribosome. The stimulation of RF-1 and RF-2 is significantly reduced by GTP and GDP, but not by GMP. The sequence is that of Peptide chain release factor 3 from Streptococcus pneumoniae (strain P1031).